A 420-amino-acid polypeptide reads, in one-letter code: Methanogen homoaconitase large subunit (420 aa).

[4Fe-4S] cluster contacts are provided by cysteine 302, cysteine 362, and cysteine 365.

It belongs to the aconitase/IPM isomerase family. LeuC type 2 subfamily. Heterotetramer of 2 HacA and 2 HacB proteins. [4Fe-4S] cluster serves as cofactor.

The catalysed reaction is (2R)-homocitrate = (2R,3S)-homoisocitrate. It carries out the reaction (2R)-homocitrate = cis-homoaconitate + H2O. The enzyme catalyses (2R,3S)-homoisocitrate = cis-homoaconitate + H2O. It catalyses the reaction cis-(homo)2aconitate + H2O = (2R,3S)-iso(homo)2citrate. The catalysed reaction is cis-(homo)3aconitate + H2O = (2R,3S)-iso(homo)3citrate. It carries out the reaction (R)-malate = maleate + H2O. The enzyme catalyses cis-aconitate + H2O = D-threo-isocitrate. Its pathway is organic acid metabolism; 2-oxosuberate biosynthesis. Functionally, component of a hydro-lyase with broad substrate specificity for cis-unsaturated tricarboxylic acids. Catalyzes both the reversible dehydration of (R)-homocitrate ((R)-2-hydroxybutane-1,2,4-tricarboxylate) to produce cis-homoaconitate ((Z)-but-1-ene-1,2,4-tricarboxylate), and its hydration to homoisocitrate ((1R,2S)-1-hydroxybutane-1,2,4-tricarboxylate). Is also able to hydrate the analogous longer chain substrates cis-homo(2)-aconitate, cis-homo(3)-aconitate, and even the non-physiological cis-homo(4)-aconitate with similar efficiency. These reactions are part of the biosynthesis pathway of coenzyme B. Can also catalyze the hydration of maleate to (R)-malate, and that of cis-aconitate. Cannot catalyze the hydration of citraconate and the dehydration of (S)-homocitrate, citramalate, 2-isopropylmalate, 3-isopropylmalate, citrate or threo-DL-isocitrate. The polypeptide is Methanogen homoaconitase large subunit (hacA) (Methanocaldococcus jannaschii (strain ATCC 43067 / DSM 2661 / JAL-1 / JCM 10045 / NBRC 100440) (Methanococcus jannaschii)).